Consider the following 393-residue polypeptide: Inulin fructotransferase [DFA-I-forming] (393 aa).

It carries out the reaction Produces alpha-D-fructofuranose beta-D-fructofuranose 1,2':2,1'-dianhydride (DFA I) by successively eliminating the diminishing (2-&gt;1)-beta-D-fructan (inulin) chain from the terminal D-fructosyl-D-fructosyl disaccharide.. The chain is Inulin fructotransferase [DFA-I-forming] from Arthrobacter globiformis.